A 208-amino-acid chain; its full sequence is RNA-binding protein KhpB (208 aa).

Positions 5 to 55 are jag_N domain; sequence TAAGRNVDEAVQSGLQELGLTKDKVEITVIEEGNKGFLGIFGKKPAIVKLV. Positions 58–135 constitute a KH domain; that stretch reads IDPIQQAKLY…GQYKNVTVDA (78 aa). The 69-residue stretch at 140-208 folds into the R3H domain; that stretch reads LKRKETLSQL…NRHLVISHKR (69 aa).

Belongs to the KhpB RNA-binding protein family. As to quaternary structure, forms a complex with KhpA.

It localises to the cytoplasm. Functionally, a probable RNA chaperone. Forms a complex with KhpA which binds to cellular RNA and controls its expression. Plays a role in peptidoglycan (PG) homeostasis and cell length regulation. The protein is RNA-binding protein KhpB of Bacillus subtilis (strain 168).